A 225-amino-acid chain; its full sequence is Uridylate kinase (225 aa).

ATP is bound at residue 9–10 (GS). Residue G46 participates in UMP binding. 2 residues coordinate ATP: G47 and R51. Residues D67 and 115-121 (THPAHTT) each bind UMP. Residues T141, N142, Y147, and D150 each contribute to the ATP site.

The protein belongs to the UMP kinase family. Homohexamer.

The protein localises to the cytoplasm. The catalysed reaction is UMP + ATP = UDP + ADP. The protein operates within pyrimidine metabolism; CTP biosynthesis via de novo pathway; UDP from UMP (UMPK route): step 1/1. Its activity is regulated as follows. Inhibited by UTP. Functionally, catalyzes the reversible phosphorylation of UMP to UDP. This Methanococcus maripaludis (strain C5 / ATCC BAA-1333) protein is Uridylate kinase.